Consider the following 117-residue polypeptide: Immunoglobulin heavy variable 3-5 (117 aa).

The first 18 residues, 1 to 18 (MKMFTLLYLLTVVPGILS), serve as a signal peptide directing secretion. One can recognise an Ig-like domain in the interval 19-117 (DVQLQESGPG…EDTATYYCAR (99 aa)). The cysteines at positions 40 and 115 are disulfide-linked.

This Mus musculus (Mouse) protein is Immunoglobulin heavy variable 3-5.